We begin with the raw amino-acid sequence, 631 residues long: Nucleoside triphosphatase I (631 aa).

The 163-residue stretch at 42–204 folds into the Helicase ATP-binding domain; that stretch reads FLGLDSMHSL…TMLVNLLRPG (163 aa). 55–62 serves as a coordination point for ATP; sequence HETGVGKT. The DEXH box signature appears at 141 to 144; sequence DECH. In terms of domain architecture, Helicase C-terminal spans 367-532; the sequence is KFIDVCLGIL…EFVQLFRVFK (166 aa).

The protein belongs to the helicase family. NPH I subfamily. In terms of assembly, monomer.

It carries out the reaction a ribonucleoside 5'-triphosphate + H2O = a ribonucleoside 5'-diphosphate + phosphate + H(+). Serves two roles in transcription; it acts in concert with viral termination factor/capping enzyme to catalyze release of UUUUUNU-containing nascent RNA from the elongation complex, and it acts by itself as a polymerase elongation factor to facilitate readthrough of intrinsic pause sites. This chain is Nucleoside triphosphatase I (NPH1), found in Homo sapiens (Human).